Reading from the N-terminus, the 49-residue chain is Large ribosomal subunit protein bL33B (49 aa).

It belongs to the bacterial ribosomal protein bL33 family.

The chain is Large ribosomal subunit protein bL33B from Bacillus anthracis.